The following is a 961-amino-acid chain: Phosphofurin acidic cluster sorting protein 1 (961 aa).

The segment covering 1–19 has biased composition (gly residues); that stretch reads MAERGGAGGGPGGAGGGSS. Disordered regions lie at residues 1–70 and 76–95; these read MAER…SSST and VAVASGSAPPGGPGPGRTPA. Ala2 bears the N-acetylalanine mark. The segment covering 20–30 has biased composition (low complexity); it reads QRGSGVAQSPQ. Ser28 carries the post-translational modification Phosphoserine. Over residues 31 to 46 the composition is skewed to pro residues; it reads QQPPQQPSQPQQPTPP. At Thr44 the chain carries Phosphothreonine. Residues 51–70 are compositionally biased toward low complexity; sequence ATSSSSSTSAAAASSSSSST. Position 249 is a phosphotyrosine (Tyr249). Over residues 260 to 271 the composition is skewed to basic and acidic residues; that stretch reads GIKSKLSDRSPD. Disordered regions lie at residues 260-297 and 375-426; these read GIKSKLSDRSPDIDNYSEEEEESFSSEQEGSDDPLHGQ and NPSD…GKDT. A compositionally biased stretch (acidic residues) spans 274-291; it reads NYSEEEEESFSSEQEGSD. Residues 351–375 are a coiled coil; that stretch reads HVSREQIREVEEDLDELYDSLEMYN. Residues Ser377 and Ser379 each carry the phosphoserine modification. Polar residues predominate over residues 404–426; it reads MSQSSSQTEIGSLNSKGSLGKDT. Phosphoserine is present on residues Ser428 and Ser493. 2 disordered regions span residues 475-540 and 758-802; these read EKVK…HSTQ and SPST…SMSS. The residue at position 502 (Thr502) is a Phosphothreonine. Phosphoserine is present on residues Ser517, Ser526, Ser527, Ser529, and Ser532. Low complexity predominate over residues 768 to 802; that stretch reads SPVVSLTVPSTSPPSSSGLSRDATATPPSSPSMSS.

This sequence belongs to the PACS family. In terms of assembly, associates with AP-1 and AP-3 but not with AP-2 complexes. Interacts with FURIN. Forms a ternary complex with furin and AP-1. Interacts with PKD2 (via acidic region). Interacts with SORL1. Interacts with WDR37.

It localises to the golgi apparatus. Its subcellular location is the trans-Golgi network. Functionally, coat protein that is involved in the localization of trans-Golgi network (TGN) membrane proteins that contain acidic cluster sorting motifs. Controls the endosome-to-Golgi trafficking of furin and mannose-6-phosphate receptor by connecting the acidic-cluster-containing cytoplasmic domain of these molecules with the adapter-protein complex-1 (AP-1) of endosomal clathrin-coated membrane pits. Required for normal ER Ca2+ handling in lymphocytes. Together with WDR37, it plays an essential role in lymphocyte development, quiescence and survival. Required for stabilizing peripheral lymphocyte populations. The protein is Phosphofurin acidic cluster sorting protein 1 (Pacs1) of Rattus norvegicus (Rat).